A 208-amino-acid chain; its full sequence is UPF0323 lipoprotein HH_0014 (208 aa).

The signal sequence occupies residues 1 to 26; the sequence is MKHIHKIKNYAMVGGLGVMAVFALNA. Residue Cys-27 is the site of N-palmitoyl cysteine attachment. Cys-27 is lipidated: S-diacylglycerol cysteine. The disordered stretch occupies residues 148 to 208; that stretch reads ANSQRNYKSP…TNRNTGSMGS (61 aa). Low complexity-rich tracts occupy residues 169-185 and 193-208; these read SAKT…SGKS and SSQS…SMGS.

Belongs to the UPF0323 family.

The protein localises to the cell membrane. In Helicobacter hepaticus (strain ATCC 51449 / 3B1), this protein is UPF0323 lipoprotein HH_0014.